The sequence spans 248 residues: Type III pantothenate kinase (248 aa).

6-13 (DCGNSFIK) lines the ATP pocket. Residues Tyr-92 and 99–102 (GLDR) each bind substrate. Asp-101 functions as the Proton acceptor in the catalytic mechanism. Asp-121 serves as a coordination point for K(+). Thr-124 provides a ligand contact to ATP. Substrate is bound at residue Thr-180.

Belongs to the type III pantothenate kinase family. Homodimer. The cofactor is NH4(+). K(+) serves as cofactor.

It localises to the cytoplasm. It catalyses the reaction (R)-pantothenate + ATP = (R)-4'-phosphopantothenate + ADP + H(+). The protein operates within cofactor biosynthesis; coenzyme A biosynthesis; CoA from (R)-pantothenate: step 1/5. Functionally, catalyzes the phosphorylation of pantothenate (Pan), the first step in CoA biosynthesis. The polypeptide is Type III pantothenate kinase (Ectopseudomonas mendocina (strain ymp) (Pseudomonas mendocina)).